Reading from the N-terminus, the 753-residue chain is Polyadenylate-binding protein, cytoplasmic and nuclear (753 aa).

Over residues 1–26 (MSAEVSTTPAADNTVNGTPEATNAAA) the composition is skewed to polar residues. Positions 1-52 (MSAEVSTTPAADNTVNGTPEATNAAATSAPEVTAVESASPSTTPSASQPHSA) are disordered. Over residues 37–52 (SASPSTTPSASQPHSA) the composition is skewed to low complexity. RRM domains lie at 52–130 (ASLY…WSQR), 140–217 (GNVF…HHIS), 233–310 (TNVY…RAQK), and 336–460 (VNLY…LAQR). 2 disordered regions span residues 367–417 (VMRD…TEKK) and 602–645 (MGQG…REEV). Basic and acidic residues predominate over residues 379–417 (ESEKEKEKESNKENEKEGEEKTEEKPKESEEEPKKTEKK). Residues 605–631 (GIRGPGYGQGRGGAPVQGGPRPQGGRG) show a composition bias toward gly residues. The 78-residue stretch at 648–725 (TGGLTAQTLS…ALSVYDEYMK (78 aa)) folds into the PABC domain. Residues 728-753 (GEGEAPAESAKPKEDAAETATEENKS) form a disordered region. The span at 737–753 (AKPKEDAAETATEENKS) shows a compositional bias: basic and acidic residues.

This sequence belongs to the polyadenylate-binding protein type-1 family.

Its subcellular location is the cytoplasm. The protein resides in the nucleus. Its function is as follows. Binds the poly(A) tail of mRNA. Appears to be an important mediator of the multiple roles of the poly(A) tail in mRNA biogenesis, stability and translation. In the nucleus, involved in both mRNA cleavage and polyadenylation. Is also required for efficient mRNA export to the cytoplasm. Acts in concert with a poly(A)-specific nuclease (PAN) to affect poly(A) tail shortening, which may occur concomitantly with either nucleocytoplasmic mRNA transport or translational initiation. In the cytoplasm, stimulates translation initiation and regulates mRNA decay through translation termination-coupled poly(A) shortening, probably mediated by PAN. In Aspergillus fumigatus (strain ATCC MYA-4609 / CBS 101355 / FGSC A1100 / Af293) (Neosartorya fumigata), this protein is Polyadenylate-binding protein, cytoplasmic and nuclear (pab1).